The following is a 220-amino-acid chain: 7-cyano-7-deazaguanine synthase (220 aa).

10–20 contributes to the ATP binding site; the sequence is FSGGQDSTTCL. Residues cysteine 186, cysteine 195, cysteine 198, and cysteine 201 each contribute to the Zn(2+) site.

It belongs to the QueC family. In terms of assembly, homodimer. Zn(2+) is required as a cofactor.

It catalyses the reaction 7-carboxy-7-deazaguanine + NH4(+) + ATP = 7-cyano-7-deazaguanine + ADP + phosphate + H2O + H(+). It functions in the pathway purine metabolism; 7-cyano-7-deazaguanine biosynthesis. Its function is as follows. Catalyzes the ATP-dependent conversion of 7-carboxy-7-deazaguanine (CDG) to 7-cyano-7-deazaguanine (preQ(0)). This chain is 7-cyano-7-deazaguanine synthase, found in Bacillus thuringiensis (strain Al Hakam).